Consider the following 813-residue polypeptide: Palmitoyltransferase AKR1 (813 aa).

A disordered region spans residues 1 to 83 (MAKKKSKSKS…PVTTSNETDP (83 aa)). Residues 1–387 (MAKKKSKSKS…KPWVSAKLGK (387 aa)) lie on the Cytoplasmic side of the membrane. Residues 9–24 (KSSSPKPKVSSTAAKP) are compositionally biased toward low complexity. Over residues 28 to 46 (DNQQNIENVQDSPSALQQQ) the composition is skewed to polar residues. Residues 47 to 78 (SATAEESENTATTATPSEGTTATTESSPVTTS) show a composition bias toward low complexity. ANK repeat units follow at residues 133–162 (PTLAKYMRSCQEGNLTIVKELISSGQVLVN), 167–196 (DEITGLHWACINNRLSLVKFLIANGANPNQ), 201–231 (LKASPLHWACRNGLVYIVDYLMRNSDADPNL), 235–264 (QTYNALHLAVHSSNIMLVIYLLLSCCSTDS), 276–305 (SNRTALHWASYQNDIFTINALLRFGADVSK), and 309–338 (SLFIPLHWAFMKGYKSVLKALVEAGSDIYF). A helical membrane pass occupies residues 388 to 408 (IITFLTPYFLLPLSFNVLSMG). The Lumenal segment spans residues 409–412 (GDQG). Residues 413-433 (GFIIPKLILAIGILGGGIYLL) traverse the membrane as a helical segment. Residues 434–452 (NKLIISQYIFDDKKLAKSP) lie on the Cytoplasmic side of the membrane. Residues 453–473 (ILAGVFSATAFWSVLVWLYNI) traverse the membrane as a helical segment. The Lumenal segment spans residues 474–485 (LPTTFIHNFFAN). The helical transmembrane segment at 486–506 (VIMAILIAIFTWSFFKAMFIN) threads the bilayer. Over 507–579 (PGFVPTPADN…YNDIGVRNHK (73 aa)) the chain is Cytoplasmic. The DHHC domain maps to 536–586 (HFCVNSFVRKPLRSRYSKHNKRLIARFDHSCPWVYNDIGVRNHKIFITFVY). Cys-566 acts as the S-palmitoyl cysteine intermediate in catalysis. A helical transmembrane segment spans residues 580–600 (IFITFVYSLNMAIFVFLYLSL). Residues 601-642 (QYFDKVKDQYDSDDEGEGEGFVCSILGDDMCYGYKNHHFHFN) lie on the Lumenal side of the membrane. The helical transmembrane segment at 643–663 (VFMWDLFQCVWVSFLCIVQTF) threads the bilayer. The Cytoplasmic segment spans residues 664–813 (QILKGLTTWE…VDYYTLYSYH (150 aa)).

It belongs to the DHHC palmitoyltransferase family. AKR/ZDHHC17 subfamily.

The protein localises to the early endosome membrane. It is found in the golgi apparatus membrane. The catalysed reaction is L-cysteinyl-[protein] + hexadecanoyl-CoA = S-hexadecanoyl-L-cysteinyl-[protein] + CoA. In terms of biological role, palmitoyltransferase specific for casein kinase 1. This is Palmitoyltransferase AKR1 (AKR1) from Candida albicans (strain SC5314 / ATCC MYA-2876) (Yeast).